Here is a 363-residue protein sequence, read N- to C-terminus: Pyrimidine monooxygenase RutA (363 aa).

Residues 49–50, N115, E124, 140–141, and S190 contribute to the FMN site; these read IK and RY.

It belongs to the NtaA/SnaA/DszA monooxygenase family. RutA subfamily.

The catalysed reaction is uracil + FMNH2 + NADH + O2 = (Z)-3-ureidoacrylate + FMN + NAD(+) + H2O + H(+). It carries out the reaction thymine + FMNH2 + NADH + O2 = (Z)-2-methylureidoacrylate + FMN + NAD(+) + H2O + H(+). Functionally, catalyzes the pyrimidine ring opening between N-3 and C-4 by an unusual flavin hydroperoxide-catalyzed mechanism, adding oxygen atoms in the process to yield ureidoacrylate peracid, that immediately reacts with FMN forming ureidoacrylate and FMN-N(5)-oxide. The FMN-N(5)-oxide reacts spontaneously with NADH to produce FMN. Requires the flavin reductase RutF to regenerate FMN in vivo. In Escherichia coli O6:K15:H31 (strain 536 / UPEC), this protein is Pyrimidine monooxygenase RutA.